Here is a 59-residue protein sequence, read N- to C-terminus: Large ribosomal subunit protein bL32 (59 aa).

The disordered stretch occupies residues 1 to 25 (MAVQQNKKSPSKRGMHRSHDFLNAA).

Belongs to the bacterial ribosomal protein bL32 family.

The chain is Large ribosomal subunit protein bL32 from Paraburkholderia phymatum (strain DSM 17167 / CIP 108236 / LMG 21445 / STM815) (Burkholderia phymatum).